A 223-amino-acid polypeptide reads, in one-letter code: Gastrula zinc finger protein XlCGF52.1 (223 aa).

8 consecutive C2H2-type zinc fingers follow at residues 6–27 (FTCPECGKRFSQKSNCWHTEDH), 33–55 (FTCMECSKSFTVKSSLLSHQRVH), 61–83 (YTCTQCNKQFSHSAQLRAHISTH), 89–111 (FPCTECSKTFSLKHKLYKHQRIH), 117–139 (FQCLECGKSFSVKHGLLKHQRSH), 145–167 (YACSECQKTFAHKTTLMVHERIH), 173–195 (YECNDCGKRFIHSTNLNCHQKIH), and 201–223 (FTCTECGKSFSLKNKLVRHQKIH).

It belongs to the krueppel C2H2-type zinc-finger protein family.

It is found in the nucleus. In terms of biological role, may be involved in transcriptional regulation. This Xenopus laevis (African clawed frog) protein is Gastrula zinc finger protein XlCGF52.1.